The sequence spans 312 residues: Acetyl-coenzyme A carboxylase carboxyl transferase subunit beta (312 aa).

The segment at 1–52 (MEMDTAVENPAVEKNGQPTPSSTSTATDAAPTPNAPNRPAPNTAGNRKRGVP) is disordered. The segment covering 18 to 32 (PTPSSTSTATDAAPT) has biased composition (low complexity). The CoA carboxyltransferase N-terminal domain maps to 55–312 (VWRKCDSCGA…IATAIDYCGK (258 aa)). Residues Cys59, Cys62, Cys78, and Cys81 each contribute to the Zn(2+) site. The C4-type zinc-finger motif lies at 59–81 (CDSCGASLFYKEVQQRLNVCPQC).

It belongs to the AccD/PCCB family. In terms of assembly, acetyl-CoA carboxylase is a heterohexamer composed of biotin carboxyl carrier protein (AccB), biotin carboxylase (AccC) and two subunits each of ACCase subunit alpha (AccA) and ACCase subunit beta (AccD). Zn(2+) serves as cofactor.

It is found in the cytoplasm. The enzyme catalyses N(6)-carboxybiotinyl-L-lysyl-[protein] + acetyl-CoA = N(6)-biotinyl-L-lysyl-[protein] + malonyl-CoA. It functions in the pathway lipid metabolism; malonyl-CoA biosynthesis; malonyl-CoA from acetyl-CoA: step 1/1. In terms of biological role, component of the acetyl coenzyme A carboxylase (ACC) complex. Biotin carboxylase (BC) catalyzes the carboxylation of biotin on its carrier protein (BCCP) and then the CO(2) group is transferred by the transcarboxylase to acetyl-CoA to form malonyl-CoA. In Rhodopirellula baltica (strain DSM 10527 / NCIMB 13988 / SH1), this protein is Acetyl-coenzyme A carboxylase carboxyl transferase subunit beta.